The following is a 1887-amino-acid chain: Bifunctional serine/threonine-protein kinase/NEDD4-like E3 ubiquitin-protein ligase (1887 aa).

Disordered stretches follow at residues 19 to 55 (TPQVNLFNNSNNGGNNSNNGGNNSTPTLTKTPSTTNF) and 72 to 98 (TDNYNFNNNNNNNNNNNNNNNNNTKEN). 2 stretches are compositionally biased toward low complexity: residues 26–54 (NNSNNGGNNSNNGGNNSTPTLTKTPSTTN) and 72–97 (TDNYNFNNNNNNNNNNNNNNNNNTKE). 6 RCC1 repeats span residues 206–260 (QGNL…ALTI), 262–314 (GKVY…NNNN), 356–409 (KGLL…VLTN), 411–470 (GLVF…AISD), 472–528 (NDTY…AMSI), and 529–581 (DGSL…IVEK). Residues 299–333 (NNNNNNNNNNSTNNNNNNNNDGAQQQFSLSQNSSS) are disordered. Disordered stretches follow at residues 594–619 (LPSSTQSQQQTELSLPSSVNSSSDSN), 823–858 (VLVHQDEKQQQREKSETELEEEQDEEEEDSEIKNGT), and 1030–1088 (DDDN…NNNN). A compositionally biased stretch (basic and acidic residues) spans 825–839 (VHQDEKQQQREKSET). The segment covering 840–852 (ELEEEQDEEEEDS) has biased composition (acidic residues). Over residues 1036–1088 (ENNSVNNNSNNNNNNNNNNNNNNNNNNNNNNNIDNNINSNSINDSSNNNNNNN) the composition is skewed to low complexity. The Protein kinase domain occupies 1158 to 1437 (YDIIKTLSTH…AHQIAVHPYF (280 aa)). Residues 1164–1172 (LSTHPHNVY) and Lys-1184 contribute to the ATP site. Asp-1281 acts as the Proton acceptor in catalysis. An HECT domain is found at 1501-1887 (ESNKLFCRLE…LEYVDGFAFI (387 aa)). The interval 1586 to 1628 (NNNNNNEENNNNNNNNNNNNNNNNNNNNNNNNNNNNNNNNNEE) is disordered. Cys-1855 acts as the Glycyl thioester intermediate in catalysis.

The protein in the N-terminal section; belongs to the protein kinase superfamily. Ser/Thr protein kinase family. In the C-terminal section; belongs to the protein kinase superfamily. CAMK Ser/Thr protein kinase family.

It catalyses the reaction L-seryl-[protein] + ATP = O-phospho-L-seryl-[protein] + ADP + H(+). The enzyme catalyses L-threonyl-[protein] + ATP = O-phospho-L-threonyl-[protein] + ADP + H(+). It carries out the reaction S-ubiquitinyl-[E2 ubiquitin-conjugating enzyme]-L-cysteine + [acceptor protein]-L-lysine = [E2 ubiquitin-conjugating enzyme]-L-cysteine + N(6)-ubiquitinyl-[acceptor protein]-L-lysine.. Its pathway is protein modification; protein ubiquitination. The sequence is that of Bifunctional serine/threonine-protein kinase/NEDD4-like E3 ubiquitin-protein ligase from Dictyostelium discoideum (Social amoeba).